The following is a 209-amino-acid chain: Inner membrane protein YjdF (209 aa).

The Periplasmic segment spans residues 1 to 7 (MTRTLKP). A helical membrane pass occupies residues 8–28 (LILNTSALTLTLILIYTGISA). Topologically, residues 29–31 (HDK) are cytoplasmic. The chain crosses the membrane as a helical span at residues 32–52 (LTWLMEVTPVIIVVQLLLATA). Over 53 to 55 (RRY) the chain is Periplasmic. Residues 56 to 76 (PLTPLLYTLIFLHAIILMVGG) form a helical membrane-spanning segment. Over 77–131 (QYTYAKVPVGFEVQEWLGLSRNPYDKLGHFFQGLVPALVAREILVRGMYVRGRKM) the chain is Cytoplasmic. Residues 132–152 (VAFLVCCVALAISAMYELIEW) traverse the membrane as a helical segment. At 153–177 (WAALAMGQGADDFLGTQGDQWDTQS) the chain is on the periplasmic side. The chain crosses the membrane as a helical span at residues 178–198 (DMFCALLGALTTVIFLARFHC). Topologically, residues 199–209 (RQLRRFGLITG) are cytoplasmic.

It localises to the cell inner membrane. The chain is Inner membrane protein YjdF (yjdF) from Escherichia coli (strain K12).